The primary structure comprises 622 residues: Basal cell adhesion molecule (622 aa).

The first 25 residues, 1-25 (MEPPDARAGLLWLTFLLSGYSGAQA), serve as a signal peptide directing secretion. 2 Ig-like V-type domains span residues 26 to 135 (ELHV…SSVR) and 140 to 250 (PEDT…HTFR). The Extracellular segment spans residues 26-541 (ELHVSVPPRV…GSVAPQTAQA (516 aa)). 3 cysteine pairs are disulfide-bonded: Cys-47–Cys-118, Cys-165–Cys-230, and Cys-284–Cys-330. Ig-like C2-type domains are found at residues 267-342 (PSTT…EEVQ), 356-435 (PLEL…QSFQ), and 442-532 (PELK…FHFG). Asn-314, Asn-323, Asn-370, and Asn-377 each carry an N-linked (GlcNAc...) asparagine glycan. 2 cysteine pairs are disulfide-bonded: Cys-378-Cys-418 and Cys-467-Cys-516. The helical transmembrane segment at 542–562 (GVAVMAVAVSVGLLLLVVAAF) threads the bilayer. Topologically, residues 563–622 (YCMRRKGRPGCCRRAEKGAPPAREPELSHSGSERPEHTGLLMGGPSGGGRGGSGGFGDEC) are cytoplasmic. A disordered region spans residues 574 to 622 (CRRAEKGAPPAREPELSHSGSERPEHTGLLMGGPSGGGRGGSGGFGDEC). The span at 575-599 (RRAEKGAPPAREPELSHSGSERPEH) shows a compositional bias: basic and acidic residues. A phosphoserine mark is found at Ser-590, Ser-592, Ser-594, and Ser-615. Residues 603–622 (LMGGPSGGGRGGSGGFGDEC) are compositionally biased toward gly residues.

In terms of assembly, homodimer. Interacts with ITGA4:ITGB1. Interacts with spectrins SPTA1 and SPTB1. In terms of processing, epinephrine-stimulated phosphorylation of Ser-615 by PKA enhances adhesion to laminin. Ser-615 can also be phosphorylated by AKT1.

The protein resides in the cell membrane. In terms of biological role, transmembrane glycoprotein that functions as both a receptor and an adhesion molecule playing a crucial role in cell adhesion, motility, migration and invasion. Extracellular domain enables binding to extracellular matrix proteins, such as laminin, integrin and other ligands while its intracellular domain interacts with cytoskeletal proteins like hemoglobin, facilitating cell signal transduction. Serves as a receptor for laminin alpha-5/LAMA5 to promote cell adhesion. Mechanistically, JAK2 induces BCAM phosphorylation and activates its adhesion to laminin by stimulating a Rap1/AKT signaling pathway in the absence of EPOR. In Mus musculus (Mouse), this protein is Basal cell adhesion molecule (Bcam).